A 220-amino-acid chain; its full sequence is Protein-L-isoaspartate O-methyltransferase (220 aa).

The active site involves Ser-67.

This sequence belongs to the methyltransferase superfamily. L-isoaspartyl/D-aspartyl protein methyltransferase family.

The protein resides in the cytoplasm. It catalyses the reaction [protein]-L-isoaspartate + S-adenosyl-L-methionine = [protein]-L-isoaspartate alpha-methyl ester + S-adenosyl-L-homocysteine. Its function is as follows. Catalyzes the methyl esterification of L-isoaspartyl residues in peptides and proteins that result from spontaneous decomposition of normal L-aspartyl and L-asparaginyl residues. It plays a role in the repair and/or degradation of damaged proteins. The chain is Protein-L-isoaspartate O-methyltransferase from Chlorobium phaeobacteroides (strain BS1).